We begin with the raw amino-acid sequence, 457 residues long: MSWSILEFLRKNPEELKNNLKRRAIDVSLVDKAVELDKKWRQVLQEVERLRHQHNVLSSQIPKLSGEERKKKIEESKNLLKILEDKEKELEKIEVERDRLLSTLPNLVADDVPNGPDDSYNIPIKFWGKFKVYEGDVEEFLRQTKDANVNYEIIKWKPKGHAEMLEDVLHLGNTLKAAEIAGSRFYYLFNDIVWLDFALLLFAIDYITQQGYTLVLPPYMLRGEVIQSVIDLDTFKDAIYKIENEDLYLIATAEHSIAAMFFKEEIEKDKLPLKFAGISPAFRKEAGAANKDLKGIFRVHQFHKVEQFIFSTPEDSWKYHAELITNAESIFQQLELPYRIVNIASGDLGACAAKKFDLEVWMPAQAKFREMVSCSNCTDWQAFRMKIRYVDRKNNKRGYVHTLNSTAIASTRTITAILENYQREDGVVEVPKVLRKYLEIFPKAPKDYIYPLKNKII.

252 to 254 serves as a coordination point for L-serine; it reads TAE. Residues 283 to 285 and Val-299 each bind ATP; that span reads RKE. Glu-306 is a binding site for L-serine. Residue 370-373 participates in ATP binding; that stretch reads EMVS. Thr-406 lines the L-serine pocket.

Belongs to the class-II aminoacyl-tRNA synthetase family. Type-1 seryl-tRNA synthetase subfamily. Homodimer. The tRNA molecule binds across the dimer.

It is found in the cytoplasm. The enzyme catalyses tRNA(Ser) + L-serine + ATP = L-seryl-tRNA(Ser) + AMP + diphosphate + H(+). The catalysed reaction is tRNA(Sec) + L-serine + ATP = L-seryl-tRNA(Sec) + AMP + diphosphate + H(+). It functions in the pathway aminoacyl-tRNA biosynthesis; selenocysteinyl-tRNA(Sec) biosynthesis; L-seryl-tRNA(Sec) from L-serine and tRNA(Sec): step 1/1. In terms of biological role, catalyzes the attachment of serine to tRNA(Ser). Is also able to aminoacylate tRNA(Sec) with serine, to form the misacylated tRNA L-seryl-tRNA(Sec), which will be further converted into selenocysteinyl-tRNA(Sec). The protein is Serine--tRNA ligase of Saccharolobus islandicus (strain Y.G.57.14 / Yellowstone #1) (Sulfolobus islandicus).